The following is a 301-amino-acid chain: Ribosomal protein L11 methyltransferase (301 aa).

Residues Thr-130, Gly-151, Asp-172, and Asn-239 each contribute to the S-adenosyl-L-methionine site.

The protein belongs to the methyltransferase superfamily. PrmA family.

The protein resides in the cytoplasm. It catalyses the reaction L-lysyl-[protein] + 3 S-adenosyl-L-methionine = N(6),N(6),N(6)-trimethyl-L-lysyl-[protein] + 3 S-adenosyl-L-homocysteine + 3 H(+). Its function is as follows. Methylates ribosomal protein L11. This chain is Ribosomal protein L11 methyltransferase, found in Campylobacter hominis (strain ATCC BAA-381 / DSM 21671 / CCUG 45161 / LMG 19568 / NCTC 13146 / CH001A).